We begin with the raw amino-acid sequence, 304 residues long: PTB domain-containing engulfment adapter protein 1 (304 aa).

Residue Thr16 is modified to Phosphothreonine. The 156-residue stretch at 21–176 folds into the PID domain; it reads SKHFIPYNAK…AGLQKRIQDL (156 aa). Residues 158 to 202 are a coiled coil; the sequence is KDVETRKQIAGLQKRIQDLETENMELKNKVQDLENQLRITQVSAP. Ser223 bears the Phosphoserine mark. The disordered stretch occupies residues 223-246; the sequence is SPISHQSSMPTRNGTQPPPVPSRS. Positions 225–237 are enriched in polar residues; sequence ISHQSSMPTRNGT.

Belongs to the ced-6 family. In terms of assembly, homodimer. Interacts with clathrin. Interacts with GDP-bound ARF6, but not with GTP-bound ARF6. Part of a complex composed of GULP1, ACAP1 and ARF6. Interacts with ACAP1, LRP1, MEGF10 and STAB2. Widely expressed. Detected in macrophages, pancreas, kidney, skeletal muscle, heart, colon, intestine, lung, placenta and ovary.

The protein resides in the cytoplasm. Its function is as follows. May function as an adapter protein. Required for efficient phagocytosis of apoptotic cells. Modulates cellular glycosphingolipid and cholesterol transport. May play a role in the internalization and endosomal trafficking of various LRP1 ligands, such as PSAP. Increases cellular levels of GTP-bound ARF6. The sequence is that of PTB domain-containing engulfment adapter protein 1 (GULP1) from Homo sapiens (Human).